A 191-amino-acid polypeptide reads, in one-letter code: MKKNLLGFTFASLLFTTGSAVAAEYKIDKEGQHAFVNFRIQHLGYSWLYGTFKDFDGTFTFDEKNPSADKVNVTINTNSVDTNHAERDKHLRSAEFLNVAKFPQATFTSTSVKKEGDELDITGNLTLNGVTKPVTLEAKLMGQGDDPWGGKRAGFEAEGKIKLKDFNITTDLGPASQEVELIISVEGVQQK.

The signal sequence occupies residues methionine 1–alanine 22.

The protein belongs to the UPF0312 family. Type 1 subfamily.

Its subcellular location is the periplasm. This Salmonella agona (strain SL483) protein is Protein YceI.